We begin with the raw amino-acid sequence, 1059 residues long: Translation initiation factor IF-2 (1059 aa).

Composition is skewed to polar residues over residues 55-75 (LPHS…NQDS) and 107-126 (KINN…NNQV). 3 disordered regions span residues 55 to 81 (LPHS…GYNE), 93 to 394 (PKPL…RLRL), and 418 to 468 (SLSL…QSAE). A compositionally biased stretch (basic and acidic residues) spans 178–187 (DSNEKSKVEV). A compositionally biased stretch (polar residues) spans 202–211 (LNRNLRNTGV). Over residues 216 to 229 (QKNKKPKQEGKKRK) the composition is skewed to basic residues. Basic and acidic residues-rich tracts occupy residues 230-252 (DKEE…DTSI) and 259-273 (SKKE…RESV). The segment covering 274 to 284 (KTSASDTSSQL) has biased composition (polar residues). 2 stretches are compositionally biased toward basic and acidic residues: residues 291–300 (KPTVKLKQEQ) and 359–368 (LTKDKKVSKW). The span at 452–463 (SHESVQSESNEQ) shows a compositional bias: low complexity. The tr-type G domain maps to 556–733 (RRPPVVTIMG…EVEDLQANPE (178 aa)). Residues 565-572 (GHVDHGKT) form a G1 region. Residue 565–572 (GHVDHGKT) participates in GTP binding. Residues 590–594 (GITQH) form a G2 region. The segment at 615–618 (DTPG) is G3. GTP is bound by residues 615–619 (DTPGH) and 669–672 (NKID). A G4 region spans residues 669-672 (NKID). Positions 705 to 707 (SAI) are G5.

The protein belongs to the TRAFAC class translation factor GTPase superfamily. Classic translation factor GTPase family. IF-2 subfamily.

Its subcellular location is the cytoplasm. In terms of biological role, one of the essential components for the initiation of protein synthesis. Protects formylmethionyl-tRNA from spontaneous hydrolysis and promotes its binding to the 30S ribosomal subunits. Also involved in the hydrolysis of GTP during the formation of the 70S ribosomal complex. The protein is Translation initiation factor IF-2 of Trichodesmium erythraeum (strain IMS101).